A 342-amino-acid polypeptide reads, in one-letter code: MASATEKRRYEVLRAIVADYIESQEPVGSKALLERHKLNVSSATIRNDMSVLESDGYIVQEHASSGRVPTEKGYRLFVDSIHDIKPLSLAERRAILGFLEGGVDLEDVLRRSVQLLSQLTHQAAVVQLPTLKTARVKHCEVVSLSPVRLLLVLITDTGRVDQRNVELDEPLEADQVTVLKDLLNGALAEKTLTDASEALQELSRNAPSDIRSTMEKCSGVLVATLVEQPSDRLILAGASNLTRLTRETAASVPMVLEALEEQVVMLKLLSNVTDLDHVTVHIGEENEDLQLRSASVVTTGYGSAGNTLGGLGVVGPTYMDYPGTISKVSAVARYVGRVLAGE.

The protein belongs to the HrcA family.

Its function is as follows. Negative regulator of class I heat shock genes (grpE-dnaK-dnaJ and groELS operons). Prevents heat-shock induction of these operons. In Corynebacterium efficiens (strain DSM 44549 / YS-314 / AJ 12310 / JCM 11189 / NBRC 100395), this protein is Heat-inducible transcription repressor HrcA.